A 497-amino-acid polypeptide reads, in one-letter code: Probable malate:quinone oxidoreductase (497 aa).

Belongs to the MQO family. FAD serves as cofactor.

It catalyses the reaction (S)-malate + a quinone = a quinol + oxaloacetate. It participates in carbohydrate metabolism; tricarboxylic acid cycle; oxaloacetate from (S)-malate (quinone route): step 1/1. The polypeptide is Probable malate:quinone oxidoreductase (Hahella chejuensis (strain KCTC 2396)).